The following is a 222-amino-acid chain: Probable fructose-6-phosphate aldolase (222 aa).

Residue Lys-87 is the Schiff-base intermediate with substrate of the active site.

It belongs to the transaldolase family. Type 3A subfamily.

The protein resides in the cytoplasm. It catalyses the reaction beta-D-fructose 6-phosphate = dihydroxyacetone + D-glyceraldehyde 3-phosphate. Its function is as follows. Catalyzes the reversible formation of fructose 6-phosphate from dihydroxyacetone and D-glyceraldehyde 3-phosphate via an aldolization reaction. In Streptococcus pneumoniae (strain ATCC 700669 / Spain 23F-1), this protein is Probable fructose-6-phosphate aldolase.